The sequence spans 429 residues: Gap junction gamma-2 protein (429 aa).

At 1-25 (MTNMSWSFLTRLLEEIHNHSTFVGK) the chain is on the cytoplasmic side. Residues 26–46 (VWLTVLVVFRIVLTAVGGESI) form a helical membrane-spanning segment. Residues 47 to 78 (YSDEQTKFTCNTRQPGCDNVCYDAFAPLSHVR) are Extracellular-facing. A helical transmembrane segment spans residues 79–99 (FWVFQIVVISTPSVMYLGYAV). Residues 100–214 (HRLARASQDE…EGLMRVYVAQ (115 aa)) are Cytoplasmic-facing. A disordered region spans residues 106–200 (SQDERRRASR…GPAGQHDGRR (95 aa)). Positions 112-123 (RASRRRPSRRAP) are enriched in basic residues. Residues 124–138 (RPPLPLPPPPHPGWP) are compositionally biased toward pro residues. Residues 142-173 (DLGEEEPMLGLGEEDEDPGVAEGLGEDEEAED) show a composition bias toward acidic residues. The chain crosses the membrane as a helical span at residues 215–235 (LVARAAFEVAFLVGQYLLYGF). Topologically, residues 236–263 (EVRPFFACSRQPCPHVVDCFVSRPTEKT) are extracellular. The chain crosses the membrane as a helical span at residues 264-284 (VFLLVMYVVSCLCLLLNLCEM). At 285 to 429 (AHLGLGNAQD…SREGKTTVWI (145 aa)) the chain is on the cytoplasmic side. Disordered regions lie at residues 296 to 316 (VRGRRPLPASPGPMPRPPPCA) and 361 to 429 (LGDL…TVWI). Over residues 303-316 (PASPGPMPRPPPCA) the composition is skewed to pro residues. Ser366 carries the post-translational modification Phosphoserine. Residues 372–395 (LPANARGPPKPGAPASGSGSATSG) are compositionally biased toward low complexity.

It belongs to the connexin family. Gamma-type subfamily. As to quaternary structure, a connexon is composed of a hexamer of connexins. Interacts with TJP1.

The protein resides in the cell membrane. The protein localises to the cell junction. It is found in the gap junction. Functionally, one gap junction consists of a cluster of closely packed pairs of transmembrane channels, the connexons, through which materials of low MW diffuse from one cell to a neighboring cell. May play a role in myelination in central and peripheral nervous systems. The chain is Gap junction gamma-2 protein (GJC2) from Bos taurus (Bovine).